A 623-amino-acid polypeptide reads, in one-letter code: MEGYHKPDQQKLQALKDTANRLRISSIQATTAAGSGHPTSCCSAAEIMAVLFFHTMRYKALDPRNPHNDRFVLSKGHAAPILYAVWAEAGFLPEAELLNLRKISSDLDGHPVPKQAFTDVATGSLGQGLGAACGMAYTGKYFDKASYRVYCMLGDGEVSEGSVWEAMAFAGIYKLDNLVAIFDINRLGQSDPAPLQHQVDVYQKRCEAFGWHAIIVDGHSVEELCKAFGQAKHQPTAIIAKTFKGRGITGIEDKEAWHGKPLPKNMAEQIIQEIYSQVQSKKKILATPPQEDAPSVDIANIRMPTPPNYKVGDKIATRKAYGLALAKLGHASDRIIALDGDTKNSTFSELFKKEHPDRFIECYIAEQNMVSIAVGCATRDRTVPFCSTFAAFFTRAFDQIRMAAISESNINLCGSHCGVSIGEDGPSQMALEDLAMFRSVPMSTVFYPSDGVATEKAVELAANTKGICFIRTSRPENAIIYSNNEDFQVGQAKVVLKSKDDQVTVIGAGVTLHEALAAAEMLKKEKIGVRVLDPFTIKPLDKKLILDCARATKGRILTVEDHYYEGGIGEAVSAVVVGEPGVTVTRLAVSQVPRSGKPAELLKMFGIDKDAIVQAVKGLVTKG.

Methionine 1 is modified (N-acetylmethionine). 2 positions are modified to N6-acetyllysine: lysine 6 and lysine 11. Histidine 37 serves as a coordination point for substrate. Serine 40 and histidine 77 together coordinate thiamine diphosphate. Residue serine 104 is modified to Phosphoserine. 123–125 (GSL) lines the thiamine diphosphate pocket. Lysine 144 is modified (N6-acetyllysine). Residue aspartate 155 coordinates Mg(2+). Thiamine diphosphate is bound by residues glycine 156 and asparagine 185. Residues asparagine 185 and leucine 187 each coordinate Mg(2+). N6-acetyllysine occurs at positions 204, 232, and 241. Lysine 244 and histidine 258 together coordinate thiamine diphosphate. Histidine 258 contacts substrate. Lysine 260 is modified (N6-acetyllysine). At tyrosine 275 the chain carries Phosphotyrosine. Threonine 287 carries the phosphothreonine modification. Phosphoserine is present on serine 295. Positions 318 and 345 each coordinate substrate. Residue serine 345 is modified to Phosphoserine. Lysine 352 is covalently cross-linked (Glycyl lysine isopeptide (Lys-Gly) (interchain with G-Cter in SUMO2)). Glutamate 366 serves as the catalytic Proton donor. Position 392 (phenylalanine 392) interacts with thiamine diphosphate. Substrate-binding residues include histidine 416 and aspartate 424. Position 428 (glutamine 428) interacts with thiamine diphosphate. Position 474 (arginine 474) interacts with substrate. An N6-acetyllysine mark is found at lysine 538 and lysine 603.

It belongs to the transketolase family. In terms of assembly, homodimer. The cofactor is Mg(2+). It depends on Ca(2+) as a cofactor. Requires Mn(2+) as cofactor. Co(2+) is required as a cofactor. Thiamine diphosphate serves as cofactor.

The enzyme catalyses D-sedoheptulose 7-phosphate + D-glyceraldehyde 3-phosphate = aldehydo-D-ribose 5-phosphate + D-xylulose 5-phosphate. Functionally, catalyzes the transfer of a two-carbon ketol group from a ketose donor to an aldose acceptor, via a covalent intermediate with the cofactor thiamine pyrophosphate. The protein is Transketolase (Tkt) of Rattus norvegicus (Rat).